The primary structure comprises 467 residues: ATP synthase subunit beta (467 aa).

ATP is bound at residue 154 to 161; sequence GGAGVGKT.

The protein belongs to the ATPase alpha/beta chains family. In terms of assembly, F-type ATPases have 2 components, CF(1) - the catalytic core - and CF(0) - the membrane proton channel. CF(1) has five subunits: alpha(3), beta(3), gamma(1), delta(1), epsilon(1). CF(0) has three main subunits: a(1), b(2) and c(9-12). The alpha and beta chains form an alternating ring which encloses part of the gamma chain. CF(1) is attached to CF(0) by a central stalk formed by the gamma and epsilon chains, while a peripheral stalk is formed by the delta and b chains.

The protein resides in the cell inner membrane. It carries out the reaction ATP + H2O + 4 H(+)(in) = ADP + phosphate + 5 H(+)(out). Produces ATP from ADP in the presence of a proton gradient across the membrane. The catalytic sites are hosted primarily by the beta subunits. The sequence is that of ATP synthase subunit beta from Petrotoga mobilis (strain DSM 10674 / SJ95).